We begin with the raw amino-acid sequence, 240 residues long: Transcriptional regulatory protein BaeR (240 aa).

The Response regulatory domain maps to 12–125; it reads RILIVEDEPK…EVVARVKTIL (114 aa). Asp-61 is subject to 4-aspartylphosphate. A DNA-binding region (ompR/PhoB-type) is located at residues 131–234; that stretch reads QRELQQQDAE…VYGVGYRWEA (104 aa).

Post-translationally, phosphorylated by BaeS.

Its subcellular location is the cytoplasm. Functionally, member of the two-component regulatory system BaeS/BaeR. Activates the mdtABCD operon. This Escherichia coli O6:H1 (strain CFT073 / ATCC 700928 / UPEC) protein is Transcriptional regulatory protein BaeR (baeR).